The sequence spans 270 residues: 4-hydroxy-4-methyl-2-oxoglutarate aldolase tasA (270 aa).

Catalysis depends on histidine 49, which acts as the Proton acceptor. Glutamate 156 and aspartate 182 together coordinate a divalent metal cation. A substrate-binding site is contributed by aspartate 182.

Belongs to the HpcH/HpaI aldolase family. Homohexamer; trimer of dimers. Co(2+) is required as a cofactor. The cofactor is Mn(2+). Requires Zn(2+) as cofactor. It depends on Fe(2+) as a cofactor. Mg(2+) serves as cofactor.

The catalysed reaction is 4-hydroxy-4-methyl-2-oxoglutarate = 2 pyruvate. Its pathway is secondary metabolite biosynthesis. Functionally, 4-hydroxy-4-methyl-2-oxoglutarate aldolase; part of the gene cluster that mediates the biosynthesis of the tetramic acids Sch210971 and Sch210972, potential anti-HIV fungal natural product that contain a decalin core. The PKS module of tasS together with the enoylreductase tasC catalyze the formation of the polyketide unit which is then conjugated to 4-hydroxyl-4-methyl glutamate (HMG) by the condensation domain of the tasS NRPS module. One unique structural feature of Sch210971 and Sch210972 is the tetramic acid motif proposed to be derived from the non-proteinogenic amino acid HMG, by a Dieckmann-type condensation catalyzed by the reductase domain of tasS. The aldolase tasA catalyzes the aldol condensation of 2 molecules of pyruvic acid to yield the intermediate 4-hydroxyl-4-methyl-2-oxoglutarate (HMOG), which can then be stereoselectively transaminated, may be by tasG, to form HMG. The Diels-Alderase tas3 then uses the Dieckmann product of tasS as substrate and catalyzes the Diels-Alder cycloaddition to form the decalin ring of Sch210971 and Sch210972. The sequence is that of 4-hydroxy-4-methyl-2-oxoglutarate aldolase tasA from Hapsidospora irregularis.